The chain runs to 316 residues: Beta-galactosidase small subunit (316 aa).

Belongs to the bacterial beta-galactosidase small subunit family. As to quaternary structure, heterodimer of a large (LacL) and a small subunit (LacM).

It carries out the reaction Hydrolysis of terminal non-reducing beta-D-galactose residues in beta-D-galactosides.. Functionally, component of a beta-galactosidase. This Lactobacillus acidophilus (strain ATCC 700396 / NCK56 / N2 / NCFM) protein is Beta-galactosidase small subunit (lacM).